A 202-amino-acid polypeptide reads, in one-letter code: Small ribosomal subunit protein uS4 (202 aa).

Residues 18 to 42 (LPGLTRKAAKRSYPPGQHGQARRKR) form a disordered region. The S4 RNA-binding domain occupies 90–152 (NRLDNVCFRL…KPSKKLAETN (63 aa)).

It belongs to the universal ribosomal protein uS4 family. In terms of assembly, part of the 30S ribosomal subunit. Contacts protein S5. The interaction surface between S4 and S5 is involved in control of translational fidelity.

One of the primary rRNA binding proteins, it binds directly to 16S rRNA where it nucleates assembly of the body of the 30S subunit. Functionally, with S5 and S12 plays an important role in translational accuracy. This Synechococcus sp. (strain RCC307) protein is Small ribosomal subunit protein uS4.